The chain runs to 335 residues: Biotin synthase (335 aa).

The Radical SAM core domain occupies 46-274 (YDIQLASLFS…KSKIRLSAGR (229 aa)). Residues Cys-61, Cys-65, and Cys-68 each contribute to the [4Fe-4S] cluster site. The [2Fe-2S] cluster site is built by Cys-105, Cys-137, Cys-197, and Arg-269.

This sequence belongs to the radical SAM superfamily. Biotin synthase family. Homodimer. It depends on [4Fe-4S] cluster as a cofactor. Requires [2Fe-2S] cluster as cofactor.

The catalysed reaction is (4R,5S)-dethiobiotin + (sulfur carrier)-SH + 2 reduced [2Fe-2S]-[ferredoxin] + 2 S-adenosyl-L-methionine = (sulfur carrier)-H + biotin + 2 5'-deoxyadenosine + 2 L-methionine + 2 oxidized [2Fe-2S]-[ferredoxin]. It participates in cofactor biosynthesis; biotin biosynthesis; biotin from 7,8-diaminononanoate: step 2/2. Functionally, catalyzes the conversion of dethiobiotin (DTB) to biotin by the insertion of a sulfur atom into dethiobiotin via a radical-based mechanism. This Prochlorococcus marinus (strain MIT 9215) protein is Biotin synthase.